A 224-amino-acid chain; its full sequence is Cytidylate kinase (224 aa).

11-19 serves as a coordination point for ATP; that stretch reads GPAAAGKST.

The protein belongs to the cytidylate kinase family. Type 1 subfamily.

It is found in the cytoplasm. The enzyme catalyses CMP + ATP = CDP + ADP. It carries out the reaction dCMP + ATP = dCDP + ADP. This Bacillus velezensis (strain DSM 23117 / BGSC 10A6 / LMG 26770 / FZB42) (Bacillus amyloliquefaciens subsp. plantarum) protein is Cytidylate kinase.